Here is a 311-residue protein sequence, read N- to C-terminus: Porphobilinogen deaminase (311 aa).

At Cys-241 the chain carries S-(dipyrrolylmethanemethyl)cysteine.

Belongs to the HMBS family. As to quaternary structure, monomer. Dipyrromethane serves as cofactor.

It catalyses the reaction 4 porphobilinogen + H2O = hydroxymethylbilane + 4 NH4(+). The protein operates within porphyrin-containing compound metabolism; protoporphyrin-IX biosynthesis; coproporphyrinogen-III from 5-aminolevulinate: step 2/4. In terms of biological role, tetrapolymerization of the monopyrrole PBG into the hydroxymethylbilane pre-uroporphyrinogen in several discrete steps. This is Porphobilinogen deaminase from Campylobacter curvus (strain 525.92).